Reading from the N-terminus, the 268-residue chain is Type III pantothenate kinase 1 (268 aa).

ATP is bound at residue D6–T13. Substrate-binding positions include Y100 and G107–R110. The active-site Proton acceptor is D109. Residue D133 coordinates K(+). T136 is an ATP binding site.

It belongs to the type III pantothenate kinase family. Homodimer. The cofactor is NH4(+). K(+) is required as a cofactor.

It localises to the cytoplasm. It carries out the reaction (R)-pantothenate + ATP = (R)-4'-phosphopantothenate + ADP + H(+). The protein operates within cofactor biosynthesis; coenzyme A biosynthesis; CoA from (R)-pantothenate: step 1/5. Functionally, catalyzes the phosphorylation of pantothenate (Pan), the first step in CoA biosynthesis. The polypeptide is Type III pantothenate kinase 1 (Symbiobacterium thermophilum (strain DSM 24528 / JCM 14929 / IAM 14863 / T)).